The chain runs to 156 residues: ATP synthase subunit b (156 aa).

A helical transmembrane segment spans residues 7 to 29 (LLGQAISFALFVWFCIKFVWPPL).

It belongs to the ATPase B chain family. As to quaternary structure, F-type ATPases have 2 components, F(1) - the catalytic core - and F(0) - the membrane proton channel. F(1) has five subunits: alpha(3), beta(3), gamma(1), delta(1), epsilon(1). F(0) has three main subunits: a(1), b(2) and c(10-14). The alpha and beta chains form an alternating ring which encloses part of the gamma chain. F(1) is attached to F(0) by a central stalk formed by the gamma and epsilon chains, while a peripheral stalk is formed by the delta and b chains.

It is found in the cell inner membrane. Functionally, f(1)F(0) ATP synthase produces ATP from ADP in the presence of a proton or sodium gradient. F-type ATPases consist of two structural domains, F(1) containing the extramembraneous catalytic core and F(0) containing the membrane proton channel, linked together by a central stalk and a peripheral stalk. During catalysis, ATP synthesis in the catalytic domain of F(1) is coupled via a rotary mechanism of the central stalk subunits to proton translocation. Component of the F(0) channel, it forms part of the peripheral stalk, linking F(1) to F(0). This Shewanella sp. (strain W3-18-1) protein is ATP synthase subunit b.